Here is a 93-residue protein sequence, read N- to C-terminus: Leydig cell tumor 10 kDa protein (93 aa).

The interval 1–41 (MAQGQRKFQAQKPKSKAAAAERSRGPRKGGRVIGPKKARVV) is disordered. Residues 7–18 (KFQAQKPKSKAA) show a composition bias toward low complexity. A compositionally biased stretch (basic residues) spans 25 to 39 (GPRKGGRVIGPKKAR).

It belongs to the UPF0390 family. Leydig cell tumor, testis and placenta.

Functionally, may have a potential role in hypercalcemia of malignancy. The polypeptide is Leydig cell tumor 10 kDa protein (Rattus norvegicus (Rat)).